Reading from the N-terminus, the 248-residue chain is MLLIPAIDLKDGHCVRLKQGDMDQSTTFGEDPAAMARKWVDAGARRLHLVDLNGAFAGAPKNHAAIKAILKEVGDDLPVQLGGGIRDLDTIEKYIDGGLRYVIIGTAAVKNPGFLKDACSAFGGHIIVGLDAKDGKVATDGWSKLTGHEVVDLAKRFEDWGVESIVYTDIGRDGMLSGINIEATVKLAQALTIPVIASGGLAGMADIEQLCAVESEGVEGVICGRAIYSGDLDFAAAQARADELNGAA.

Catalysis depends on D8, which acts as the Proton acceptor. The active-site Proton donor is the D131.

The protein belongs to the HisA/HisF family.

The protein resides in the cytoplasm. It carries out the reaction 1-(5-phospho-beta-D-ribosyl)-5-[(5-phospho-beta-D-ribosylamino)methylideneamino]imidazole-4-carboxamide = 5-[(5-phospho-1-deoxy-D-ribulos-1-ylimino)methylamino]-1-(5-phospho-beta-D-ribosyl)imidazole-4-carboxamide. It participates in amino-acid biosynthesis; L-histidine biosynthesis; L-histidine from 5-phospho-alpha-D-ribose 1-diphosphate: step 4/9. The sequence is that of 1-(5-phosphoribosyl)-5-[(5-phosphoribosylamino)methylideneamino] imidazole-4-carboxamide isomerase from Paracidovorax citrulli (strain AAC00-1) (Acidovorax citrulli).